Here is a 445-residue protein sequence, read N- to C-terminus: Enolase (445 aa).

Residues histidine 165 and glutamate 174 each contribute to the substrate site. Catalysis depends on glutamate 217, which acts as the Proton donor. Residues aspartate 252, glutamate 303, and aspartate 330 each contribute to the Mg(2+) site. Positions 303 and 330 each coordinate substrate. Lysine 355 serves as the catalytic Proton acceptor. Substrate is bound by residues 382 to 385 (SHRS) and lysine 406.

The protein belongs to the enolase family. As to quaternary structure, homodimer. Mg(2+) serves as cofactor.

The protein localises to the cytoplasm. The enzyme catalyses (2R)-2-phosphoglycerate = phosphoenolpyruvate + H2O. It functions in the pathway carbohydrate degradation; glycolysis; pyruvate from D-glyceraldehyde 3-phosphate: step 4/5. The polypeptide is Enolase (ENO) (Eimeria tenella (Coccidian parasite)).